The primary structure comprises 313 residues: tRNA uridine(34) hydroxylase (313 aa).

A Rhodanese domain is found at 124–218; it reads SDPEVLLIDT…YLEEVPQEET (95 aa). Cys-178 (cysteine persulfide intermediate) is an active-site residue.

This sequence belongs to the TrhO family.

It catalyses the reaction uridine(34) in tRNA + AH2 + O2 = 5-hydroxyuridine(34) in tRNA + A + H2O. Functionally, catalyzes oxygen-dependent 5-hydroxyuridine (ho5U) modification at position 34 in tRNAs. The chain is tRNA uridine(34) hydroxylase from Pseudomonas fluorescens (strain SBW25).